We begin with the raw amino-acid sequence, 194 residues long: Peptidyl-tRNA hydrolase (194 aa).

Tyrosine 16 is a binding site for tRNA. The active-site Proton acceptor is the histidine 21. Residues phenylalanine 67, asparagine 69, and asparagine 115 each contribute to the tRNA site.

This sequence belongs to the PTH family. Monomer.

The protein localises to the cytoplasm. It carries out the reaction an N-acyl-L-alpha-aminoacyl-tRNA + H2O = an N-acyl-L-amino acid + a tRNA + H(+). Hydrolyzes ribosome-free peptidyl-tRNAs (with 1 or more amino acids incorporated), which drop off the ribosome during protein synthesis, or as a result of ribosome stalling. In terms of biological role, catalyzes the release of premature peptidyl moieties from peptidyl-tRNA molecules trapped in stalled 50S ribosomal subunits, and thus maintains levels of free tRNAs and 50S ribosomes. The sequence is that of Peptidyl-tRNA hydrolase from Escherichia coli O81 (strain ED1a).